A 517-amino-acid polypeptide reads, in one-letter code: Cobyric acid synthase (517 aa).

Positions 253 to 453 (EVEIAVIKLP…IHGILDNDSL (201 aa)) constitute a GATase cobBQ-type domain. The active-site Nucleophile is the Cys334. The active site involves His445.

Belongs to the CobB/CobQ family. CobQ subfamily.

The protein operates within cofactor biosynthesis; adenosylcobalamin biosynthesis. Its function is as follows. Catalyzes amidations at positions B, D, E, and G on adenosylcobyrinic A,C-diamide. NH(2) groups are provided by glutamine, and one molecule of ATP is hydrogenolyzed for each amidation. This Moorella thermoacetica (strain ATCC 39073 / JCM 9320) protein is Cobyric acid synthase.